A 92-amino-acid chain; its full sequence is Protein AC152 (92 aa).

Functionally, acts as a transactivator of AC102 and HE65 genes. Therefore, participates in the global recruitment of G-actin to the host nucleus. The chain is Protein AC152 (AC152) from Autographa californica nuclear polyhedrosis virus (AcMNPV).